The sequence spans 591 residues: Parathyroid hormone/parathyroid hormone-related peptide receptor (591 aa).

An N-terminal signal peptide occupies residues 1–26; it reads MGAARIAPSLALLLCCPVLSSAYALV. The Extracellular portion of the chain corresponds to 27-188; the sequence is DADDVFTKEE…REREVFDRLG (162 aa). 3 disulfide bridges follow: cysteine 48/cysteine 117, cysteine 108/cysteine 148, and cysteine 131/cysteine 170. A disordered region spans residues 67–104; that stretch reads KGWTPASTSGKPRKEKASGKFYPESKENKDVPTGSRRR. Basic and acidic residues predominate over residues 81-96; sequence EKASGKFYPESKENKD. 4 N-linked (GlcNAc...) asparagine glycosylation sites follow: asparagine 151, asparagine 161, asparagine 166, and asparagine 176. A helical transmembrane segment spans residues 189 to 212; that stretch reads MIYTVGYSMSLASLTVAVLILAYF. At 213–219 the chain is on the cytoplasmic side; sequence RRLHCTR. A helical transmembrane segment spans residues 220 to 239; sequence NYIHMHMFLSFMLRAASIFV. The Extracellular portion of the chain corresponds to 240-282; it reads KDAVLYSGFTLDEAERLTEEELHIIAQVPPPPAAAAVGYAGCR. Residues 283–306 traverse the membrane as a helical segment; the sequence is VAVTFFLYFLATNYYWILVEGLYL. Topologically, residues 307–320 are cytoplasmic; sequence HSLIFMAFFSEKKY. The helical transmembrane segment at 321–342 threads the bilayer; sequence LWGFTIFGWGLPAVFVAVWVGV. Topologically, residues 343–361 are extracellular; it reads RATLANTGCWDLSSGHKKW. The chain crosses the membrane as a helical span at residues 362–382; that stretch reads IIQVPILASVVLNFILFINII. The Cytoplasmic segment spans residues 383–409; that stretch reads RVLATKLRETNAGRCDTRQQYRKLLRS. A helical transmembrane segment spans residues 410–428; it reads TLVLVPLFGVHYTVFMALP. Topologically, residues 429–440 are extracellular; that stretch reads YTEVSGTLWQIQ. A helical transmembrane segment spans residues 441–463; the sequence is MHYEMLFNSFQGFFVAIIYCFCN. The Cytoplasmic segment spans residues 464 to 591; that stretch reads GEVQAEIRKS…LLQEEWETVM (128 aa). An Important for interaction with G proteins motif is present at residues 474 to 477; sequence WSRW. The disordered stretch occupies residues 516–544; sequence LPLSPRLPPATTNGHSQLPGHAKPGAPAT.

Belongs to the G-protein coupled receptor 2 family. In terms of assembly, homodimer in the absence of bound ligand. Peptide hormone binding leads to dissociation of the homodimer. Post-translationally, N-glycosylated.

Its subcellular location is the cell membrane. In terms of biological role, G-protein-coupled receptor for parathyroid hormone (PTH) and for parathyroid hormone-related peptide (PTHLH). Ligand binding causes a conformation change that triggers signaling via guanine nucleotide-binding proteins (G proteins) and modulates the activity of downstream effectors, such as adenylate cyclase (cAMP). PTH1R is coupled to G(s) G alpha proteins and mediates activation of adenylate cyclase activity. PTHLH dissociates from PTH1R more rapidly than PTH; as consequence, the cAMP response induced by PTHLH decays faster than the response induced by PTH. This chain is Parathyroid hormone/parathyroid hormone-related peptide receptor (Pth1r), found in Rattus norvegicus (Rat).